We begin with the raw amino-acid sequence, 106 residues long: ATP-dependent Clp protease adapter protein ClpS (106 aa).

Belongs to the ClpS family. As to quaternary structure, binds to the N-terminal domain of the chaperone ClpA.

Involved in the modulation of the specificity of the ClpAP-mediated ATP-dependent protein degradation. The sequence is that of ATP-dependent Clp protease adapter protein ClpS from Vibrio parahaemolyticus serotype O3:K6 (strain RIMD 2210633).